The chain runs to 209 residues: MATKKRSASSSRWLQEHFSDKYVQQAQKKGLRSRAWFKLDEIQQSDKLFRPGMTVVDLGAAPGGWSQYVATQIGGKGRIIACDILPMDPMVGVDFLQGDFREPLVLQALLERVGEQKVQVVVSDMAPNMSGTPAVDIPKSMYLVELALDMCRDVLAPGGNFLVKVFQGEGFDEYLREIRSLFTKVKIRKPDASRARSREVYIVATGRKL.

Gly63, Trp65, Asp83, Asp99, and Asp124 together coordinate S-adenosyl-L-methionine. Lys164 functions as the Proton acceptor in the catalytic mechanism.

This sequence belongs to the class I-like SAM-binding methyltransferase superfamily. RNA methyltransferase RlmE family.

The protein resides in the cytoplasm. The enzyme catalyses uridine(2552) in 23S rRNA + S-adenosyl-L-methionine = 2'-O-methyluridine(2552) in 23S rRNA + S-adenosyl-L-homocysteine + H(+). In terms of biological role, specifically methylates the uridine in position 2552 of 23S rRNA at the 2'-O position of the ribose in the fully assembled 50S ribosomal subunit. In Sodalis glossinidius (strain morsitans), this protein is Ribosomal RNA large subunit methyltransferase E.